Reading from the N-terminus, the 176-residue chain is Ribosome maturation factor RimM (176 aa).

In terms of domain architecture, PRC barrel spans 99-174 (KDEFYVRDLI…IVLIQPELWN (76 aa)).

This sequence belongs to the RimM family. Binds ribosomal protein uS19.

It is found in the cytoplasm. Functionally, an accessory protein needed during the final step in the assembly of 30S ribosomal subunit, possibly for assembly of the head region. Essential for efficient processing of 16S rRNA. May be needed both before and after RbfA during the maturation of 16S rRNA. It has affinity for free ribosomal 30S subunits but not for 70S ribosomes. In Leptospira borgpetersenii serovar Hardjo-bovis (strain JB197), this protein is Ribosome maturation factor RimM.